The chain runs to 572 residues: Proline--tRNA ligase (572 aa).

It belongs to the class-II aminoacyl-tRNA synthetase family. ProS type 1 subfamily. In terms of assembly, homodimer.

The protein resides in the cytoplasm. The catalysed reaction is tRNA(Pro) + L-proline + ATP = L-prolyl-tRNA(Pro) + AMP + diphosphate. Catalyzes the attachment of proline to tRNA(Pro) in a two-step reaction: proline is first activated by ATP to form Pro-AMP and then transferred to the acceptor end of tRNA(Pro). As ProRS can inadvertently accommodate and process non-cognate amino acids such as alanine and cysteine, to avoid such errors it has two additional distinct editing activities against alanine. One activity is designated as 'pretransfer' editing and involves the tRNA(Pro)-independent hydrolysis of activated Ala-AMP. The other activity is designated 'posttransfer' editing and involves deacylation of mischarged Ala-tRNA(Pro). The misacylated Cys-tRNA(Pro) is not edited by ProRS. This chain is Proline--tRNA ligase, found in Haemophilus influenzae (strain PittGG).